Consider the following 869-residue polypeptide: MASFIWVQLKKTSEVDLAKPLVKFIQQTYPSGGEEQAQYCRAAEELSKLRRSALGRPLDKHEGALETLLRYYDQICSIEPKFPFSENQICLTFTWKDAFDKGSLFGGSVKLALASLGYEKSCVLFNCAALASQIAAEQNLDNDEGLKTAAKQYQFASGAFLHIKDTVLSALSREPTVDISPDTVGTLSLIMLAQAQEVFFLKATRDKMKDAIIAKLANQAADYFGDAFKQCQYKDTLPKEVFPTLAAKQCIMQANAEYHQSILAKQQKKFGEEIARLQHAAELIKNVASRYDEYVNVKDFSDKINRALTAAKKDNDFIYHDRVPDLKDLDPIGKATLVKPTPVNVPVSQKFTDLFEKMVPVSVQQSLAVFSQRKADLVNRSIAQMREATTLANGVLASLNLPAAIEDVSGDTVPQSILTKSTSVVEQGGIQTVDQLIKELPELLQRNREILEESLRLLDEEEATDNDLRAKFKDRWQRTPSNDLYKPLRAEGAKFRAVLDKAVQADGQVKERYQSHRDTIALLCKPEPELNAAIPSANPAKTMQGSEVVSVLKSLLSNLDEIKKERESLENDLKSVNFDMTSKFLTALAQDGVINEEALSVTELDRIYGGLTSKVQESLKKQEGLLKNIQVSHQEFSKMKQSNNEANLREEVLKNLATAYDNFVELVANLKEGTKFYNELTEILVRFQNKCSDIVFARKTERDELLKDLQQSIAREPSAPSIPPPAYQSSPAAGHAAAPPTPAPRTMPPAKPQPPARPPPPVLPANRVPPASAAAAPAGVGTASAAPPQTPGSAPPPQAQGPPYPTYPGYPGYCQMPMPMGYNPYAYGQYNMPYPPVYHQSPGQAPYPGPQQPTYPFPQPPQQSYYPQQ.

Position 2 is an N-acetylalanine (A2). The 390-residue stretch at S3–A392 folds into the BRO1 domain. The tract at residues T176–V503 is interaction with CHMP4A, CHMP4B and CHMP4C. N6-acetyllysine is present on K215. Positions A383–Q869 are interaction with SDCBP. At T479 the chain carries Phosphothreonine. Residue S481 is modified to Phosphoserine. A self-association region spans residues V503–Q869. Disordered regions lie at residues R715–P808 and Y838–Q869. Residues P717 to P720 form an interaction with TSG101 region. Residue S730 is modified to Phosphoserine. Residues P739–L763 are compositionally biased toward pro residues. Phosphothreonine is present on T741. R745 carries the omega-N-methylarginine modification. Positions P764–P787 are enriched in low complexity. Pro residues-rich tracts occupy residues P788–P808 and A845–P861. The interaction with CEP55 stretch occupies residues Q798–Y807.

Self-associates. Interacts with SH3KBP1. Interacts with PDCD6 in a calcium-dependent manner. Interacts with TSG101 in a calcium-dependent manner; PDCD6IP homooligomerization may be required for TSG101-binding. Interacts with SGSM3. Directly interacts with CHMP4A, CHMP4B and CHMP4C. Directly interacts with CEP55 in a 1:2 stoechiometry; this interaction is required for PDCD6IP targeting to the midbody. May interact with PDGFRB. Interacts with SH3GL1 and SH3GL2/endophilin-1. Forms a complex with SDCBP and SDC2. Found in a complex with F-actin, TJP1/ZO-1 and PARD3. Interacts with CD2AP. Interacts with ARRDC1. Interacts (via BRO1 domain) with the ATG12-ATG3 conjugat; this interaction is bridged by ATG12 and promotes multiple PDCD6IP-mediated functions such as endolysosomal trafficking, macroautophagy and exosome biogenesis. May be phosphorylated on tyrosine residues by activated PDGFRB. Ubiquitously expressed. High expression in choroid plexus and low expression in cerebral cortex (at protein level).

It is found in the cytoplasm. The protein localises to the cytosol. Its subcellular location is the melanosome. It localises to the cytoskeleton. The protein resides in the microtubule organizing center. It is found in the centrosome. The protein localises to the secreted. Its subcellular location is the extracellular exosome. It localises to the cell junction. The protein resides in the tight junction. It is found in the midbody. The protein localises to the midbody ring. Functionally, multifunctional protein involved in endocytosis, multivesicular body biogenesis, membrane repair, cytokinesis, apoptosis and maintenance of tight junction integrity. Class E VPS protein involved in concentration and sorting of cargo proteins of the multivesicular body (MVB) for incorporation into intralumenal vesicles (ILVs) that are generated by invagination and scission from the limiting membrane of the endosome. Binds to the phospholipid lysobisphosphatidic acid (LBPA) which is abundant in MVBs internal membranes. The MVB pathway requires the sequential function of ESCRT-O, -I,-II and -III complexes. The ESCRT machinery also functions in topologically equivalent membrane fission events, such as the terminal stages of cytokinesis. Adapter for a subset of ESCRT-III proteins, such as CHMP4, to function at distinct membranes. Required for completion of cytokinesis. May play a role in the regulation of both apoptosis and cell proliferation. Regulates exosome biogenesis in concert with SDC1/4 and SDCBP. By interacting with F-actin, PARD3 and TJP1 secures the proper assembly and positioning of actomyosin-tight junction complex at the apical sides of adjacent epithelial cells that defines a spatial membrane domain essential for the maintenance of epithelial cell polarity and barrier. In Mus musculus (Mouse), this protein is Programmed cell death 6-interacting protein.